The following is a 616-amino-acid chain: Alpha terpineol synthase, chloroplastic (616 aa).

A chloroplast-targeting transit peptide spans 1-41 (MALLSVAPLQKPLTSCSPFSTTMPTLGVCTPRKVVTPSIIM). Mg(2+) contacts are provided by D367, D371, and D519. Positions 367-371 (DDIYD) match the DDXXD motif motif.

The protein belongs to the terpene synthase family. Tpsd subfamily. It depends on Mg(2+) as a cofactor. The cofactor is Mn(2+).

The protein localises to the plastid. It localises to the chloroplast. The catalysed reaction is (2E)-geranyl diphosphate + H2O = (S)-alpha-terpineol + diphosphate. It carries out the reaction (2E)-geranyl diphosphate + H2O = 1,8-cineole + diphosphate. It catalyses the reaction (2E)-geranyl diphosphate = beta-myrcene + diphosphate. The enzyme catalyses (2E)-geranyl diphosphate = (1S,5S)-sabinene + diphosphate. The protein operates within terpene metabolism; oleoresin biosynthesis. It functions in the pathway secondary metabolite biosynthesis; terpenoid biosynthesis. Functionally, monoterpene synthase (TPS) involved in the biosynthesis of monoterpene natural products included in conifer oleoresin secretions and volatile emissions; these compounds contribute to biotic and abiotic stress defense against herbivores and pathogens. Catalyzes the conversion of (2E)-geranyl diphosphate (GPP) to alpha-terpineol and, to a lower extent, to 1,8-cineole, myrcene and (-)-sabinene. The polypeptide is Alpha terpineol synthase, chloroplastic (Pinus contorta (Shore pine)).